Reading from the N-terminus, the 565-residue chain is Heme/hemopexin transporter protein HuxB (565 aa).

The first 26 residues, 1 to 26 (MKMRPRYSVIASAVSLGFVLSKSVMA), serve as a signal peptide directing secretion. In terms of domain architecture, POTRA spans 73-150 (FPLTQVQILD…GTVKILLLKG (78 aa)).

Belongs to the TPS (TC 1.B.20) family.

The protein resides in the cell outer membrane. Its function is as follows. Likely functions in the release of soluble HxuA from the cell. Functionally, probable member of a two partner secretion pathway (TPS) in which it mediates the secretion of HuxA. The sequence is that of Heme/hemopexin transporter protein HuxB (hxuB) from Haemophilus influenzae (strain 86-028NP).